A 408-amino-acid polypeptide reads, in one-letter code: Peptidase T (408 aa).

Position 78 (H78) interacts with Zn(2+). Residue D80 is part of the active site. D140 lines the Zn(2+) pocket. The Proton acceptor role is filled by E173. Zn(2+)-binding residues include E174, D196, and H379.

The protein belongs to the peptidase M20B family. Requires Zn(2+) as cofactor.

The protein resides in the cytoplasm. It carries out the reaction Release of the N-terminal residue from a tripeptide.. Its function is as follows. Cleaves the N-terminal amino acid of tripeptides. This Escherichia coli (strain UTI89 / UPEC) protein is Peptidase T.